A 511-amino-acid chain; its full sequence is Arabinose import ATP-binding protein AraG (511 aa).

ABC transporter domains are found at residues 5-240 (LEFR…MVGR) and 240-501 (RQID…LRPR). Residue 37–44 (GENGAGKS) participates in ATP binding.

This sequence belongs to the ABC transporter superfamily. Arabinose importer (TC 3.A.1.2.2) family. As to quaternary structure, the complex is composed of two ATP-binding proteins (AraG), two transmembrane proteins (AraH) and a solute-binding protein (AraF).

Its subcellular location is the cell inner membrane. The catalysed reaction is L-arabinose(out) + ATP + H2O = L-arabinose(in) + ADP + phosphate + H(+). Its function is as follows. Part of the ABC transporter complex AraFGH involved in arabinose import. Responsible for energy coupling to the transport system. This chain is Arabinose import ATP-binding protein AraG, found in Ralstonia nicotianae (strain ATCC BAA-1114 / GMI1000) (Ralstonia solanacearum).